Reading from the N-terminus, the 1358-residue chain is DNA-directed RNA polymerase subunit beta (1358 aa).

This sequence belongs to the RNA polymerase beta chain family. As to quaternary structure, the RNAP catalytic core consists of 2 alpha, 1 beta, 1 beta' and 1 omega subunit. When a sigma factor is associated with the core the holoenzyme is formed, which can initiate transcription.

The enzyme catalyses RNA(n) + a ribonucleoside 5'-triphosphate = RNA(n+1) + diphosphate. DNA-dependent RNA polymerase catalyzes the transcription of DNA into RNA using the four ribonucleoside triphosphates as substrates. This is DNA-directed RNA polymerase subunit beta from Thioalkalivibrio sulfidiphilus (strain HL-EbGR7).